We begin with the raw amino-acid sequence, 312 residues long: Elongation factor Ts (312 aa).

The segment at 80 to 83 (TDFV) is involved in Mg(2+) ion dislocation from EF-Tu.

It belongs to the EF-Ts family.

It localises to the cytoplasm. In terms of biological role, associates with the EF-Tu.GDP complex and induces the exchange of GDP to GTP. It remains bound to the aminoacyl-tRNA.EF-Tu.GTP complex up to the GTP hydrolysis stage on the ribosome. The protein is Elongation factor Ts of Paramagnetospirillum magneticum (strain ATCC 700264 / AMB-1) (Magnetospirillum magneticum).